A 499-amino-acid polypeptide reads, in one-letter code: Kynurenine 3-monooxygenase 3 (499 aa).

Belongs to the aromatic-ring hydroxylase family. KMO subfamily. FAD serves as cofactor.

The protein resides in the mitochondrion outer membrane. It catalyses the reaction L-kynurenine + NADPH + O2 + H(+) = 3-hydroxy-L-kynurenine + NADP(+) + H2O. It participates in cofactor biosynthesis; NAD(+) biosynthesis; quinolinate from L-kynurenine: step 1/3. Its function is as follows. Catalyzes the hydroxylation of L-kynurenine (L-Kyn) to form 3-hydroxy-L-kynurenine (L-3OHKyn). Required for synthesis of quinolinic acid. In Aspergillus niger (strain ATCC MYA-4892 / CBS 513.88 / FGSC A1513), this protein is Kynurenine 3-monooxygenase 3 (bna4-3).